A 198-amino-acid polypeptide reads, in one-letter code: Putative mycofactocin biosynthesis transcriptional regulator MftR (198 aa).

Residues 12-72 (STTPHHISDV…GDFSTHLAQL (61 aa)) enclose the HTH tetR-type domain. Positions 35–54 (SVDDIARAAGIARRTLFRYY) form a DNA-binding region, H-T-H motif.

In terms of biological role, may regulate a gene cluster involved in mycofactocin expression. Mycofactocin is a conserved polypeptide that might serve as an electron carrier. The polypeptide is Putative mycofactocin biosynthesis transcriptional regulator MftR (mftR) (Mycobacterium tuberculosis (strain ATCC 25618 / H37Rv)).